We begin with the raw amino-acid sequence, 779 residues long: Endonuclease MutS2 (779 aa).

An ATP-binding site is contributed by 328–335; that stretch reads GPNTGGKT. The Smr domain occupies 704–779; that stretch reads LDLRGKRYEE…GSGATIVTLG (76 aa).

Belongs to the DNA mismatch repair MutS family. MutS2 subfamily. In terms of assembly, homodimer. Binds to stalled ribosomes, contacting rRNA.

Functionally, endonuclease that is involved in the suppression of homologous recombination and thus may have a key role in the control of bacterial genetic diversity. In terms of biological role, acts as a ribosome collision sensor, splitting the ribosome into its 2 subunits. Detects stalled/collided 70S ribosomes which it binds and splits by an ATP-hydrolysis driven conformational change. Acts upstream of the ribosome quality control system (RQC), a ribosome-associated complex that mediates the extraction of incompletely synthesized nascent chains from stalled ribosomes and their subsequent degradation. Probably generates substrates for RQC. The polypeptide is Endonuclease MutS2 (Streptococcus pyogenes serotype M5 (strain Manfredo)).